Reading from the N-terminus, the 58-residue chain is Sperm protamine P2 (58 aa).

Residues 1-58 form a disordered region; sequence RRRRRRGKGRGKKRKGKGKKRGKGRRRGSKGRKKKKGKGKKRKRRRRRRRKGSKGKGK.

As to expression, gonads.

Its subcellular location is the nucleus. It is found in the chromosome. Functionally, protamines substitute for histones in the chromatin of sperm during the haploid phase of spermatogenesis. They compact sperm DNA into a highly condensed, stable and inactive complex. The polypeptide is Sperm protamine P2 (Bolinus brandaris (Purple dye murex)).